Here is a 371-residue protein sequence, read N- to C-terminus: UDP-N-acetylglucosamine--N-acetylmuramyl-(pentapeptide) pyrophosphoryl-undecaprenol N-acetylglucosamine transferase (371 aa).

UDP-N-acetyl-alpha-D-glucosamine is bound by residues 10 to 12 (TGG), Asn-124, Arg-165, Ser-197, Ile-251, and Gln-296.

It belongs to the glycosyltransferase 28 family. MurG subfamily.

The protein localises to the cell membrane. It catalyses the reaction di-trans,octa-cis-undecaprenyl diphospho-N-acetyl-alpha-D-muramoyl-L-alanyl-D-glutamyl-meso-2,6-diaminopimeloyl-D-alanyl-D-alanine + UDP-N-acetyl-alpha-D-glucosamine = di-trans,octa-cis-undecaprenyl diphospho-[N-acetyl-alpha-D-glucosaminyl-(1-&gt;4)]-N-acetyl-alpha-D-muramoyl-L-alanyl-D-glutamyl-meso-2,6-diaminopimeloyl-D-alanyl-D-alanine + UDP + H(+). It participates in cell wall biogenesis; peptidoglycan biosynthesis. Functionally, cell wall formation. Catalyzes the transfer of a GlcNAc subunit on undecaprenyl-pyrophosphoryl-MurNAc-pentapeptide (lipid intermediate I) to form undecaprenyl-pyrophosphoryl-MurNAc-(pentapeptide)GlcNAc (lipid intermediate II). This Carboxydothermus hydrogenoformans (strain ATCC BAA-161 / DSM 6008 / Z-2901) protein is UDP-N-acetylglucosamine--N-acetylmuramyl-(pentapeptide) pyrophosphoryl-undecaprenol N-acetylglucosamine transferase.